We begin with the raw amino-acid sequence, 327 residues long: Phenylalanine--tRNA ligase alpha subunit (327 aa).

E252 lines the Mg(2+) pocket.

It belongs to the class-II aminoacyl-tRNA synthetase family. Phe-tRNA synthetase alpha subunit type 1 subfamily. Tetramer of two alpha and two beta subunits. The cofactor is Mg(2+).

Its subcellular location is the cytoplasm. It carries out the reaction tRNA(Phe) + L-phenylalanine + ATP = L-phenylalanyl-tRNA(Phe) + AMP + diphosphate + H(+). The sequence is that of Phenylalanine--tRNA ligase alpha subunit from Sodalis glossinidius (strain morsitans).